A 154-amino-acid chain; its full sequence is Endoribonuclease YbeY (154 aa).

Residues H114, H118, and H124 each coordinate Zn(2+).

Belongs to the endoribonuclease YbeY family. It depends on Zn(2+) as a cofactor.

It localises to the cytoplasm. In terms of biological role, single strand-specific metallo-endoribonuclease involved in late-stage 70S ribosome quality control and in maturation of the 3' terminus of the 16S rRNA. The sequence is that of Endoribonuclease YbeY from Histophilus somni (strain 129Pt) (Haemophilus somnus).